The sequence spans 622 residues: MDRSGSSDFAGAAATTGRSNPAPWSDDKESPNNEDDSNEDDGDHTTPAKVTDPLAPKLANNERILVVSVTERTRETWGQKAEFLLAVIGFAVDLGNVWRFPYICYQNGGGAFLVPYCLFLIFGGLPLFYMELALGQFHRCGCLSIWKRICPALKGVGYAICLIDIYMGMYYNTIIGWAVYYLFASFTSKLPWTSCDNPWNTENCMQVTSENFTELATSPAKEFFERKVLESYKGNGLDFMGPVKPTLALCVFGVFVLVYFSLWKGVRSAGKVVWVTALAPYVVLIILLVRGVSLPGADEGIKYYLTPEWHKLKNSKVWIDAASQIFFSLGPGFGTLLALSSYNKFNNNCYRDALITSSINCLTSFLAGFVIFSVLGYMAYVQKTSIDKVGLEGPGLVFIVYPEAIATMSGSVFWSIIFFLMLITLGLDSTFGGLEAMITALCDEYPRVIGRRRELFVLLLLAFIFLCALPTMTYGGVVLVNFLNVYGPGLAILFVVFVEAAGVFWFYGVDRFSSDVEQMLGSKPGLFWRICWTYISPVFLLTIFIFSIMGYKEMLGEEYYYPDWSYQVGWAVTCSSVLCIPMYIIYKFFFASKGGCRQRLQESFQPEDNCGSVVPGQQGTSV.

A disordered region spans residues 1-53 (MDRSGSSDFAGAAATTGRSNPAPWSDDKESPNNEDDSNEDDGDHTTPAKVTDP). The Cytoplasmic portion of the chain corresponds to 1–82 (MDRSGSSDFA…TRETWGQKAE (82 aa)). Residues 32-42 (NNEDDSNEDDG) show a composition bias toward acidic residues. The next 3 helical transmembrane spans lie at 83 to 103 (FLLAVIGFAVDLGNVWRFPYI), 111 to 130 (AFLVPYCLFLIFGGLPLFYM), and 155 to 175 (GVGYAICLIDIYMGMYYNTII). Na(+) is bound by residues Gly-89, Ala-91, Val-92, and Asn-96. The Extracellular segment spans residues 176-244 (GWAVYYLFAS…NGLDFMGPVK (69 aa)). A disulfide bond links Cys-195 and Cys-204. Asn-211 is a glycosylation site (N-linked (GlcNAc...) asparagine). Transmembrane regions (helical) follow at residues 245–263 (PTLALCVFGVFVLVYFSLW), 272–289 (VVWVTALAPYVVLIILLV), 325–342 (IFFSLGPGFGTLLALSSY), 354–375 (LITSSINCLTSFLAGFVIFSVL), and 408–427 (MSGSVFWSIIFFLMLITLGL). Residues Ser-328, Asn-360, Leu-425, Asp-428, and Ser-429 each coordinate Na(+). Helical transmembrane passes span 455 to 473 (LFVLLLLAFIFLCALPTMT), 489 to 509 (GLAILFVVFVEAAGVFWFYGV), 530 to 549 (ICWTYISPVFLLTIFIFSIM), and 568 to 586 (VGWAVTCSSVLCIPMYIIY). The Cytoplasmic portion of the chain corresponds to 587-622 (KFFFASKGGCRQRLQESFQPEDNCGSVVPGQQGTSV).

Belongs to the sodium:neurotransmitter symporter (SNF) (TC 2.A.22) family. In terms of tissue distribution, expression is specific to cell bodies in the ventral ganglion of the embryonic and larval nervous system.

It is found in the cell membrane. Terminates the action of serotonin by its high affinity sodium-dependent reuptake into presynaptic terminals. The chain is Sodium-dependent serotonin transporter (SerT) from Drosophila melanogaster (Fruit fly).